The primary structure comprises 387 residues: Oxidase FUB9 (387 aa).

Residues 1–20 form a disordered region; sequence MSRTNLPIQPAKMSDATSSK. The 362-residue stretch at 18-379 folds into the FMN hydroxy acid dehydrogenase domain; sequence SSKPQIFSIQ…TPAHLSILNA (362 aa). Tyr-44 is a binding site for a 2-oxocarboxylate. FMN-binding residues include Ser-126, Gln-150, and Thr-178. Residue Arg-187 participates in a 2-oxocarboxylate binding. Lys-250 is an FMN binding site. The Proton acceptor role is filled by His-274. Arg-277 lines the a 2-oxocarboxylate pocket. Residues 305–309 and 328–329 each bind FMN; these read DGGFR and GR.

It belongs to the FMN-dependent alpha-hydroxy acid dehydrogenase family. FMN is required as a cofactor.

It functions in the pathway mycotoxin biosynthesis. Functionally, oxidase; part of the gene cluster that mediates the biosynthesis of fusaric acid, a mycotoxin with low to moderate toxicity to animals and humans, but with high phytotoxic properties. L-aspartate is suggested as fusaric acid amino acid precursor that is activated and further processed to O-acetyl-L-homoserine by cluster enzymes aspartate kinase FUB3 and homoserine O-acetyltransferase FUB5, as well as enzymes of the primary metabolism. The polyketide synthase (PKS) FUB1 generates the triketide trans-2-hexenal which is presumptively released by the hydrolase FUB4 and linked to the NRPS-bound amino acid precursor by NAD(P)-dependent dehydrogenase FUB6. FUB1, FUB4, and the non-canonical NRPS Fub8 may form an enzyme complex. Further processing of the NRPS-bound intermediate might be carried out by FUB6 and the sulfhydrylase FUB7, enabling a spontaneous electrocyclization to close the carbon backbone of fusaric acid. Dihydrofusaric acid is likely to be released via reduction by the thioester reductase (TR) domain of FUB8 whereupon the final oxidation to fusaric acid may (also) be performed by the FMN-dependent dehydrogenase FUB9. This is Oxidase FUB9 from Fusarium oxysporum f. sp. lycopersici (strain 4287 / CBS 123668 / FGSC 9935 / NRRL 34936) (Fusarium vascular wilt of tomato).